The primary structure comprises 462 residues: Keratin, type I cytoskeletal 28 (462 aa).

Residues 1–26 (MSLRFSGGSRHVGIQSGSLRPPSGGA) form a disordered region. The segment at 1–83 (MSLRFSGGSR…GSEGGLLSGN (83 aa)) is head. Residues 84–119 (EKVTMQNLNNRLASYLDNVKALEEANSELERKIKTW) form a coil 1A region. Positions 84 to 399 (EKVTMQNLNN…RLIDGDENSC (316 aa)) constitute an IF rod domain. The linker 1 stretch occupies residues 120 to 141 (HEKYGPGSCRGLDRDYSKYHLT). Residues 142–233 (IEDLKSKIIS…KNHEEEMKVL (92 aa)) are coil 1B. The interval 234–256 (QCAAGGNVNVEMNAAPGVDLTVL) is linker 12. Residues 257 to 395 (LNNMRAEYEA…ETYCRLIDGD (139 aa)) form a coil 2 region. Positions 396 to 462 (ENSCSVSKGF…NGKAEQRVPF (67 aa)) are tail.

It belongs to the intermediate filament family. Heterotetramer of two type I and two type II keratins. In terms of tissue distribution, in the hair follicle and bulb, uniformly expressed in all three layers of the inner root sheath (the Henle layer, the Huxley layer and the cuticle) and observed in matrix cells (at protein level).

It localises to the cytoplasm. In terms of biological role, essential for the proper assembly of types I and II keratin protein complexes and the formation of keratin intermediate filaments in the inner root sheath (irs). The protein is Keratin, type I cytoskeletal 28 of Mus musculus (Mouse).